A 239-amino-acid chain; its full sequence is tRNA (guanine-N(7)-)-methyltransferase (239 aa).

Glu-68, Glu-93, Asp-120, and Asp-143 together coordinate S-adenosyl-L-methionine. The active site involves Asp-143. Residues Lys-147, Asp-180, and Thr-217–Glu-220 contribute to the substrate site.

The protein belongs to the class I-like SAM-binding methyltransferase superfamily. TrmB family.

The enzyme catalyses guanosine(46) in tRNA + S-adenosyl-L-methionine = N(7)-methylguanosine(46) in tRNA + S-adenosyl-L-homocysteine. The protein operates within tRNA modification; N(7)-methylguanine-tRNA biosynthesis. In terms of biological role, catalyzes the formation of N(7)-methylguanine at position 46 (m7G46) in tRNA. The polypeptide is tRNA (guanine-N(7)-)-methyltransferase (Vibrio cholerae serotype O1 (strain ATCC 39315 / El Tor Inaba N16961)).